A 600-amino-acid polypeptide reads, in one-letter code: Arginine--tRNA ligase (600 aa).

Positions 123–133 match the 'HIGH' region motif; that stretch reads PNVAKPMHVGH.

This sequence belongs to the class-I aminoacyl-tRNA synthetase family. As to quaternary structure, monomer.

It is found in the cytoplasm. It catalyses the reaction tRNA(Arg) + L-arginine + ATP = L-arginyl-tRNA(Arg) + AMP + diphosphate. This Caulobacter vibrioides (strain NA1000 / CB15N) (Caulobacter crescentus) protein is Arginine--tRNA ligase.